A 307-amino-acid polypeptide reads, in one-letter code: Olfactory receptor 13G1 (307 aa).

At Met-1–Gly-22 the chain is on the extracellular side. The N-linked (GlcNAc...) asparagine glycan is linked to Asn-2. Residues Ile-23–Ile-43 traverse the membrane as a helical segment. Topologically, residues Ile-44–Thr-51 are cytoplasmic. The chain crosses the membrane as a helical span at residues Leu-52–Thr-72. Topologically, residues Ser-73 to Ser-96 are extracellular. A disulfide bridge links Cys-94 with Cys-186. A helical transmembrane segment spans residues Gln-97–Tyr-117. Topologically, residues Asp-118–His-136 are cytoplasmic. The helical transmembrane segment at Met-137–Thr-157 threads the bilayer. The Extracellular portion of the chain corresponds to Ala-158–Val-194. A helical membrane pass occupies residues Met-195–Ser-214. The Cytoplasmic segment spans residues Tyr-215–Ala-234. The chain crosses the membrane as a helical span at residues Phe-235–Thr-255. The Extracellular segment spans residues Tyr-256 to Asp-268. Residues Lys-269–Phe-289 form a helical membrane-spanning segment. Residues Gln-290–His-307 lie on the Cytoplasmic side of the membrane.

The protein belongs to the G-protein coupled receptor 1 family.

The protein resides in the cell membrane. Odorant receptor. The sequence is that of Olfactory receptor 13G1 (OR13G1) from Homo sapiens (Human).